A 348-amino-acid polypeptide reads, in one-letter code: GTP 3',8-cyclase (348 aa).

A Radical SAM core domain is found at 24-248 (PFGRAVTYLR…TDIDYQTGGP (225 aa)). Residue arginine 33 participates in GTP binding. Cysteine 40 and cysteine 44 together coordinate [4Fe-4S] cluster. An S-adenosyl-L-methionine-binding site is contributed by tyrosine 46. Cysteine 47 lines the [4Fe-4S] cluster pocket. Residue arginine 82 coordinates GTP. S-adenosyl-L-methionine is bound at residue glycine 86. Threonine 115 contacts GTP. Residue serine 139 coordinates S-adenosyl-L-methionine. Lysine 175 provides a ligand contact to GTP. Methionine 209 lines the S-adenosyl-L-methionine pocket. [4Fe-4S] cluster is bound by residues cysteine 272 and cysteine 275. 277–279 (RVR) serves as a coordination point for GTP. Residue cysteine 289 participates in [4Fe-4S] cluster binding.

It belongs to the radical SAM superfamily. MoaA family. As to quaternary structure, monomer and homodimer. It depends on [4Fe-4S] cluster as a cofactor.

It carries out the reaction GTP + AH2 + S-adenosyl-L-methionine = (8S)-3',8-cyclo-7,8-dihydroguanosine 5'-triphosphate + 5'-deoxyadenosine + L-methionine + A + H(+). The protein operates within cofactor biosynthesis; molybdopterin biosynthesis. Functionally, catalyzes the cyclization of GTP to (8S)-3',8-cyclo-7,8-dihydroguanosine 5'-triphosphate. The chain is GTP 3',8-cyclase from Rhizobium etli (strain ATCC 51251 / DSM 11541 / JCM 21823 / NBRC 15573 / CFN 42).